A 105-amino-acid chain; its full sequence is Large ribosomal subunit protein uL23 (105 aa).

This sequence belongs to the universal ribosomal protein uL23 family. Part of the 50S ribosomal subunit. Contacts protein L29, and trigger factor when it is bound to the ribosome.

One of the early assembly proteins it binds 23S rRNA. One of the proteins that surrounds the polypeptide exit tunnel on the outside of the ribosome. Forms the main docking site for trigger factor binding to the ribosome. This Ureaplasma parvum serovar 3 (strain ATCC 27815 / 27 / NCTC 11736) protein is Large ribosomal subunit protein uL23.